The chain runs to 170 residues: Ureidoglycolate lyase (170 aa).

Belongs to the ureidoglycolate lyase family. As to quaternary structure, homodimer. Ni(2+) serves as cofactor.

It catalyses the reaction (S)-ureidoglycolate = urea + glyoxylate. It functions in the pathway nitrogen metabolism; (S)-allantoin degradation. Catalyzes the catabolism of the allantoin degradation intermediate (S)-ureidoglycolate, generating urea and glyoxylate. Involved in the utilization of allantoin as nitrogen source. The protein is Ureidoglycolate lyase of Burkholderia mallei (strain NCTC 10247).